The following is a 143-amino-acid chain: Polyadenylate-binding protein-interacting protein 2 (143 aa).

The short motif at 11-21 is the PAM2-like element; sequence TLNPNAPVFDP.

This Arabidopsis thaliana (Mouse-ear cress) protein is Polyadenylate-binding protein-interacting protein 2 (CID2).